A 184-amino-acid polypeptide reads, in one-letter code: Ribosome-recycling factor (184 aa).

The protein belongs to the RRF family.

Its subcellular location is the cytoplasm. Responsible for the release of ribosomes from messenger RNA at the termination of protein biosynthesis. May increase the efficiency of translation by recycling ribosomes from one round of translation to another. The chain is Ribosome-recycling factor from Acinetobacter baylyi (strain ATCC 33305 / BD413 / ADP1).